We begin with the raw amino-acid sequence, 184 residues long: Ethylene-responsive transcription factor ERF024 (184 aa).

Positions 1–21 are disordered; sequence MQGTSKDNGGRHPLYRGVRQR. Residues 14–72 constitute a DNA-binding region (AP2/ERF); that stretch reads LYRGVRQRKNSNKWVSEIREPRKPNRIWLGTFSTPEMAAIAYDVAALALKGSQAELNFP.

The protein belongs to the AP2/ERF transcription factor family. ERF subfamily.

It localises to the nucleus. Functionally, probably acts as a transcriptional activator. Binds to the GCC-box pathogenesis-related promoter element. May be involved in the regulation of gene expression by stress factors and by components of stress signal transduction pathways. This is Ethylene-responsive transcription factor ERF024 (ERF024) from Arabidopsis thaliana (Mouse-ear cress).